We begin with the raw amino-acid sequence, 91 residues long: Small ribosomal subunit protein uS15 (91 aa).

This sequence belongs to the universal ribosomal protein uS15 family. In terms of assembly, part of the 30S ribosomal subunit. Forms a bridge to the 50S subunit in the 70S ribosome, contacting the 23S rRNA.

Its function is as follows. One of the primary rRNA binding proteins, it binds directly to 16S rRNA where it helps nucleate assembly of the platform of the 30S subunit by binding and bridging several RNA helices of the 16S rRNA. Forms an intersubunit bridge (bridge B4) with the 23S rRNA of the 50S subunit in the ribosome. The protein is Small ribosomal subunit protein uS15 of Legionella pneumophila (strain Paris).